The primary structure comprises 124 residues: Small ribosomal subunit protein uS12 (124 aa).

A 3-methylthioaspartic acid modification is found at aspartate 89. Residues 104–124 (LQGVKDRKQSRSKYGAKRPKK) form a disordered region. Positions 113–124 (SRSKYGAKRPKK) are enriched in basic residues.

The protein belongs to the universal ribosomal protein uS12 family. In terms of assembly, part of the 30S ribosomal subunit. Contacts proteins S8 and S17. May interact with IF1 in the 30S initiation complex.

In terms of biological role, with S4 and S5 plays an important role in translational accuracy. Interacts with and stabilizes bases of the 16S rRNA that are involved in tRNA selection in the A site and with the mRNA backbone. Located at the interface of the 30S and 50S subunits, it traverses the body of the 30S subunit contacting proteins on the other side and probably holding the rRNA structure together. The combined cluster of proteins S8, S12 and S17 appears to hold together the shoulder and platform of the 30S subunit. This Thiomonas delicata (Thiomonas cuprina) protein is Small ribosomal subunit protein uS12.